Reading from the N-terminus, the 178-residue chain is Probable DNA-directed RNA polymerase subunit delta (178 aa).

Residues 14–81 (LSLIDVAHFI…GNNTWGLRAW (68 aa)) enclose the HTH HARE-type domain. Disordered stretches follow at residues 89 to 122 (EEVQ…DYDD) and 141 to 178 (LDED…PEDK). Composition is skewed to acidic residues over residues 105 to 122 (DDDD…DYDD), 141 to 150 (LDEDEDDDDH), and 161 to 178 (TVED…PEDK).

The protein belongs to the RpoE family. As to quaternary structure, RNAP is composed of a core of 2 alpha, a beta and a beta' subunits. The core is associated with a delta subunit and one of several sigma factors.

Functionally, participates in both the initiation and recycling phases of transcription. In the presence of the delta subunit, RNAP displays an increased specificity of transcription, a decreased affinity for nucleic acids, and an increased efficiency of RNA synthesis because of enhanced recycling. This Listeria innocua serovar 6a (strain ATCC BAA-680 / CLIP 11262) protein is Probable DNA-directed RNA polymerase subunit delta.